The chain runs to 225 residues: Cytidylate kinase (225 aa).

11-19 serves as a coordination point for ATP; the sequence is GPAAAGKST.

The protein belongs to the cytidylate kinase family. Type 1 subfamily.

It is found in the cytoplasm. It catalyses the reaction CMP + ATP = CDP + ADP. The catalysed reaction is dCMP + ATP = dCDP + ADP. The protein is Cytidylate kinase of Anoxybacillus flavithermus (strain DSM 21510 / WK1).